Reading from the N-terminus, the 176-residue chain is RNA polymerase sigma factor SigZ (176 aa).

A Polymerase core binding motif is present at residues 30-43 (DLLQIVFMKIQVHL). Positions 125 to 144 (QKELSEKLGISYSGAKSRVQ) form a DNA-binding region, H-T-H motif.

The protein belongs to the sigma-70 factor family. ECF subfamily.

In terms of biological role, sigma factors are initiation factors that promote the attachment of RNA polymerase to specific initiation sites and are then released. This chain is RNA polymerase sigma factor SigZ (sigZ), found in Bacillus subtilis (strain 168).